Consider the following 343-residue polypeptide: MSTYQAATIVAAPNEFRVPFPPFVQISKVQFQREAGSRLLAASGWDGTCRVYEVGKLGDISEKLVFTHGKPLLTCTFAGYNKVAFGGVDHNVKLADIETGNGTQLGSHALAVRCMEFNPMSSLIVSGGWDSSVKLWDARSYGNGAIESVNVSSSVYAMDVLKHTILVGTKDRKIFMYDSRKLREPLQVRDSPLKYQTRAVQFFPTGEAFVVSSIEGRVAVEYVDQSGEEMMKRKYAFKCHREKDTDGTELIHPVHTVAFHPKYGTFATGGADGIVNIWDPFNRKRIIQLHKFETSISSLSFNEDGSQLAIATSYQYEKEIDPSPLPNNSITIRHITDPESRPK.

WD repeat units lie at residues 21 to 62, 67 to 105, 107 to 146, 150 to 187, 192 to 232, 249 to 288, and 291 to 331; these read PPFV…DISE, THGK…GTQL, SHAL…NGAI, NVSS…EPLQ, PLKY…EMMK, ELIH…RIIQ, and KFET…NSIT. The interval 322 to 343 is disordered; that stretch reads PSPLPNNSITIRHITDPESRPK. Positions 334-343 are enriched in basic and acidic residues; that stretch reads HITDPESRPK.

The protein belongs to the WD repeat BUB3 family. May interact with bub-1; for localization at the kinetochore and the onset of anaphase.

It localises to the chromosome. It is found in the centromere. Its subcellular location is the kinetochore. The protein resides in the nucleus. Has a dual function in spindle-assembly checkpoint signaling and in promoting the establishment of correct kinetochore-microtubule (K-MT) attachments. Promotes the formation of stable end-on bipolar attachments of chromosomes. Necessary for expression and kinetochore localization of bub-1. Plays a role in synapsis checkpoint signaling inducing apoptosis in response to unsynapsed chromosomes and thus controlling chromosomal segregation during oocyte meiosis. In Caenorhabditis elegans, this protein is Mitotic checkpoint protein bub-3.